A 145-amino-acid polypeptide reads, in one-letter code: Internal scaffolding protein VP3 (145 aa).

The protein belongs to the microviridae B protein family.

It is found in the host cytoplasm. Functionally, participates in the assembly of the viral procapsid in the cytoplasm. Released from the procapsid upon genome packaging, possibly through affinity displacement by the protein ORF8, or by proteolysis. The protein is Internal scaffolding protein VP3 of Chlamydia phage 1 (Bacteriophage Chp1).